The sequence spans 197 residues: Protein GrpE (197 aa).

Over residues 1 to 27 (MSNKEQHIEKEEQLQEEKHEEQQKTEE) the composition is skewed to basic and acidic residues. A disordered region spans residues 1–34 (MSNKEQHIEKEEQLQEEKHEEQQKTEETEVEAVN).

Belongs to the GrpE family. Homodimer.

The protein localises to the cytoplasm. Functionally, participates actively in the response to hyperosmotic and heat shock by preventing the aggregation of stress-denatured proteins, in association with DnaK and GrpE. It is the nucleotide exchange factor for DnaK and may function as a thermosensor. Unfolded proteins bind initially to DnaJ; upon interaction with the DnaJ-bound protein, DnaK hydrolyzes its bound ATP, resulting in the formation of a stable complex. GrpE releases ADP from DnaK; ATP binding to DnaK triggers the release of the substrate protein, thus completing the reaction cycle. Several rounds of ATP-dependent interactions between DnaJ, DnaK and GrpE are required for fully efficient folding. This is Protein GrpE from Pasteurella multocida (strain Pm70).